The following is a 408-amino-acid chain: Type II methyltransferase M.VspI (408 aa).

This sequence belongs to the N(4)/N(6)-methyltransferase family.

It carries out the reaction a 2'-deoxyadenosine in DNA + S-adenosyl-L-methionine = an N(6)-methyl-2'-deoxyadenosine in DNA + S-adenosyl-L-homocysteine + H(+). Its function is as follows. A gamma subtype methylase, recognizes the double-stranded sequence 5'-ATTAAT-3', methylates A-5 on both strands, and protects the DNA from cleavage by the VspI endonuclease. The chain is Type II methyltransferase M.VspI from Vibrio sp. (strain 343).